The primary structure comprises 392 residues: Potassium/proton antiporter CemA (392 aa).

The next 4 helical transmembrane spans lie at 174 to 194 (FLAS…VWWL), 269 to 289 (SLAN…MLSL), 316 to 336 (FLIL…WEVI), and 352 to 372 (FIFM…KYWI).

This sequence belongs to the CemA family.

The protein resides in the plastid. It localises to the chloroplast inner membrane. It catalyses the reaction K(+)(in) + H(+)(out) = K(+)(out) + H(+)(in). Contributes to K(+)/H(+) antiport activity by supporting proton efflux to control proton extrusion and homeostasis in chloroplasts in a light-dependent manner to modulate photosynthesis. Prevents excessive induction of non-photochemical quenching (NPQ) under continuous-light conditions. Indirectly promotes efficient inorganic carbon uptake into chloroplasts. This chain is Potassium/proton antiporter CemA, found in Nephroselmis olivacea (Green alga).